Reading from the N-terminus, the 72-residue chain is Translation initiation factor IF-1 (72 aa).

In terms of domain architecture, S1-like spans 1 to 72 (MSKEDVIEVE…TRGRITWRAK (72 aa)).

It belongs to the IF-1 family. In terms of assembly, component of the 30S ribosomal translation pre-initiation complex which assembles on the 30S ribosome in the order IF-2 and IF-3, IF-1 and N-formylmethionyl-tRNA(fMet); mRNA recruitment can occur at any time during PIC assembly.

It localises to the cytoplasm. One of the essential components for the initiation of protein synthesis. Stabilizes the binding of IF-2 and IF-3 on the 30S subunit to which N-formylmethionyl-tRNA(fMet) subsequently binds. Helps modulate mRNA selection, yielding the 30S pre-initiation complex (PIC). Upon addition of the 50S ribosomal subunit IF-1, IF-2 and IF-3 are released leaving the mature 70S translation initiation complex. This Acetivibrio thermocellus (strain ATCC 27405 / DSM 1237 / JCM 9322 / NBRC 103400 / NCIMB 10682 / NRRL B-4536 / VPI 7372) (Clostridium thermocellum) protein is Translation initiation factor IF-1.